The chain runs to 215 residues: Fanconi anemia core complex-associated protein 24 (215 aa).

Residues 160 to 215 (LRTVQQIPGVGKVKAPLLLQKFPSIQQLSNASIGELEQVVGQAVAQQIHAFFTQPR) are ruvA domain 2-like.

In terms of assembly, belongs to the multisubunit FA complex composed of FANCA, FANCB, FANCC, FANCE, FANCF, FANCG, FANCL/PHF9, FANCM and FAAP24. Interacts with FANCM.

Its subcellular location is the nucleus. Its function is as follows. Plays a role in DNA repair through recruitment of the FA core complex to damaged DNA. Regulates FANCD2 monoubiquitination upon DNA damage. Induces chromosomal instability as well as hypersensitivity to DNA cross-linking agents, when repressed. Targets FANCM/FAAP24 complex to the DNA, preferentially to single strand DNA. The polypeptide is Fanconi anemia core complex-associated protein 24 (Homo sapiens (Human)).